The primary structure comprises 312 residues: Methionyl-tRNA formyltransferase (312 aa).

117 to 120 (SLLP) serves as a coordination point for (6S)-5,6,7,8-tetrahydrofolate.

Belongs to the Fmt family.

The catalysed reaction is L-methionyl-tRNA(fMet) + (6R)-10-formyltetrahydrofolate = N-formyl-L-methionyl-tRNA(fMet) + (6S)-5,6,7,8-tetrahydrofolate + H(+). Attaches a formyl group to the free amino group of methionyl-tRNA(fMet). The formyl group appears to play a dual role in the initiator identity of N-formylmethionyl-tRNA by promoting its recognition by IF2 and preventing the misappropriation of this tRNA by the elongation apparatus. The polypeptide is Methionyl-tRNA formyltransferase (Bordetella pertussis (strain Tohama I / ATCC BAA-589 / NCTC 13251)).